Here is a 106-residue protein sequence, read N- to C-terminus: Envelope small membrane protein (106 aa).

At 1–11 (MMNLLNTSLEE) the chain is on the virion surface side. The helical transmembrane segment at 12–32 (NGSFLTALYVICEFVALYLLG) threads the bilayer. Over 33 to 106 (RALQAFVQAA…ANFQNGKLHT (74 aa)) the chain is Intravirion.

It belongs to the gammacoronaviruses E protein family. Homooligomer. Interacts with the M membrane protein in the budding compartment of the host cell, which is located between endoplasmic reticulum and the Golgi complex. The cytoplasmic tails of both proteins are important for this function. Interacts with Nucleoprotein.

It localises to the host Golgi apparatus membrane. Functionally, plays a central role in virus morphogenesis and assembly. Acts as a viroporin and self-assembles in host membranes forming pentameric protein-lipid pores that allow ion transport. Also plays a role in the induction of apoptosis. In Gallus gallus (Chicken), this protein is Envelope small membrane protein.